The following is a 592-amino-acid chain: Isocitrate dehydrogenase kinase/phosphatase 1 (592 aa).

ATP contacts are provided by residues 337–343 (APGTPGM) and Lys-358. Asp-393 is a catalytic residue.

It belongs to the AceK family.

It localises to the cytoplasm. It catalyses the reaction L-seryl-[isocitrate dehydrogenase] + ATP = O-phospho-L-seryl-[isocitrate dehydrogenase] + ADP + H(+). Its function is as follows. Bifunctional enzyme which can phosphorylate or dephosphorylate isocitrate dehydrogenase (IDH) on a specific serine residue. This is a regulatory mechanism which enables bacteria to bypass the Krebs cycle via the glyoxylate shunt in response to the source of carbon. When bacteria are grown on glucose, IDH is fully active and unphosphorylated, but when grown on acetate or ethanol, the activity of IDH declines drastically concomitant with its phosphorylation. The protein is Isocitrate dehydrogenase kinase/phosphatase 1 of Pseudoalteromonas translucida (strain TAC 125).